The sequence spans 226 residues: ATP synthase F(0) complex subunit a (226 aa).

Transmembrane regions (helical) follow at residues Pro-12 to Pro-32, Trp-68 to Phe-88, Gln-97 to Leu-117, Ile-138 to Val-158, Ile-164 to Ile-184, and Thr-189 to Ile-209.

The protein belongs to the ATPase A chain family. In terms of assembly, component of the ATP synthase complex composed at least of ATP5F1A/subunit alpha, ATP5F1B/subunit beta, ATP5MC1/subunit c (homooctomer), MT-ATP6/subunit a, MT-ATP8/subunit 8, ATP5ME/subunit e, ATP5MF/subunit f, ATP5MG/subunit g, ATP5MK/subunit k, ATP5MJ/subunit j, ATP5F1C/subunit gamma, ATP5F1D/subunit delta, ATP5F1E/subunit epsilon, ATP5PF/subunit F6, ATP5PB/subunit b, ATP5PD/subunit d, ATP5PO/subunit OSCP. ATP synthase complex consists of a soluble F(1) head domain (subunits alpha(3) and beta(3)) - the catalytic core - and a membrane F(0) domain - the membrane proton channel (subunits c, a, 8, e, f, g, k and j). These two domains are linked by a central stalk (subunits gamma, delta, and epsilon) rotating inside the F1 region and a stationary peripheral stalk (subunits F6, b, d, and OSCP). Interacts with DNAJC30; interaction is direct.

The protein localises to the mitochondrion inner membrane. The catalysed reaction is H(+)(in) = H(+)(out). Functionally, subunit a, of the mitochondrial membrane ATP synthase complex (F(1)F(0) ATP synthase or Complex V) that produces ATP from ADP in the presence of a proton gradient across the membrane which is generated by electron transport complexes of the respiratory chain. ATP synthase complex consist of a soluble F(1) head domain - the catalytic core - and a membrane F(1) domain - the membrane proton channel. These two domains are linked by a central stalk rotating inside the F(1) region and a stationary peripheral stalk. During catalysis, ATP synthesis in the catalytic domain of F(1) is coupled via a rotary mechanism of the central stalk subunits to proton translocation. With the subunit c (ATP5MC1), forms the proton-conducting channel in the F(0) domain, that contains two crucial half-channels (inlet and outlet) that facilitate proton movement from the mitochondrial intermembrane space (IMS) into the matrix. Protons are taken up via the inlet half-channel and released through the outlet half-channel, following a Grotthuss mechanism. The chain is ATP synthase F(0) complex subunit a from Pongo pygmaeus (Bornean orangutan).